Consider the following 209-residue polypeptide: Ribosomal RNA large subunit methyltransferase E (209 aa).

Residues glycine 63, tryptophan 65, aspartate 83, aspartate 99, and aspartate 124 each contribute to the S-adenosyl-L-methionine site. Lysine 164 acts as the Proton acceptor in catalysis.

This sequence belongs to the class I-like SAM-binding methyltransferase superfamily. RNA methyltransferase RlmE family.

The protein resides in the cytoplasm. It carries out the reaction uridine(2552) in 23S rRNA + S-adenosyl-L-methionine = 2'-O-methyluridine(2552) in 23S rRNA + S-adenosyl-L-homocysteine + H(+). In terms of biological role, specifically methylates the uridine in position 2552 of 23S rRNA at the 2'-O position of the ribose in the fully assembled 50S ribosomal subunit. This is Ribosomal RNA large subunit methyltransferase E from Vibrio campbellii (strain ATCC BAA-1116).